The following is a 145-amino-acid chain: Group IID secretory phospholipase A2 (145 aa).

The N-terminal stretch at 1–20 is a signal peptide; that stretch reads MELALLCGLVVMAGVIPIQG. 7 disulfides stabilise this stretch: C46–C138, C48–C64, C63–C118, C69–C145, C70–C111, C79–C104, and C97–C109. Ca(2+) is bound by residues H47, G49, and G51. The active site involves H67. D68 is a binding site for Ca(2+). N89 carries N-linked (GlcNAc...) asparagine glycosylation. The active site involves D112.

This sequence belongs to the phospholipase A2 family. It depends on Ca(2+) as a cofactor. As to expression, highly expressed in pancreas and spleen and less abundantly in colon, thymus, placenta, small intestine, and prostate.

It is found in the secreted. It catalyses the reaction a 1,2-diacyl-sn-glycero-3-phosphoethanolamine + H2O = a 1-acyl-sn-glycero-3-phosphoethanolamine + a fatty acid + H(+). The catalysed reaction is 1-hexadecanoyl-2-(9Z-octadecenoyl)-sn-glycero-3-phosphoethanolamine + H2O = 1-hexadecanoyl-sn-glycero-3-phosphoethanolamine + (9Z)-octadecenoate + H(+). The enzyme catalyses 1-hexadecanoyl-2-(9Z,12Z-octadecadienoyl)-sn-glycero-3-phosphoethanolamine + H2O = 1-hexadecanoyl-sn-glycero-3-phosphoethanolamine + (9Z,12Z)-octadecadienoate + H(+). It carries out the reaction 1,2-dihexadecanoyl-sn-glycero-3-phospho-(1'-sn-glycerol) + H2O = 1-hexadecanoyl-sn-glycero-3-phospho-(1'-sn-glycerol) + hexadecanoate + H(+). It catalyses the reaction 1-hexadecanoyl-2-(9Z-octadecenoyl)-sn-glycero-3-phospho-(1'-sn-glycerol) + H2O = 1-hexadecanoyl-sn-glycero-3-phospho-(1'-sn-glycerol) + (9Z)-octadecenoate + H(+). The catalysed reaction is a 1,2-diacyl-sn-glycero-3-phosphocholine + H2O = a 1-acyl-sn-glycero-3-phosphocholine + a fatty acid + H(+). The enzyme catalyses 1,2-dihexadecanoyl-sn-glycero-3-phosphocholine + H2O = 1-hexadecanoyl-sn-glycero-3-phosphocholine + hexadecanoate + H(+). It carries out the reaction 1-hexadecanoyl-2-(9Z-octadecenoyl)-sn-glycero-3-phosphocholine + H2O = 1-hexadecanoyl-sn-glycero-3-phosphocholine + (9Z)-octadecenoate + H(+). It catalyses the reaction 1-hexadecanoyl-2-(9Z,12Z-octadecadienoyl)-sn-glycero-3-phosphocholine + H2O = (9Z,12Z)-octadecadienoate + 1-hexadecanoyl-sn-glycero-3-phosphocholine + H(+). The catalysed reaction is 1-hexadecanoyl-2-(4Z,7Z,10Z,13Z,16Z,19Z-docosahexaenoyl)-sn-glycero-3-phosphocholine + H2O = (4Z,7Z,10Z,13Z,16Z,19Z)-docosahexaenoate + 1-hexadecanoyl-sn-glycero-3-phosphocholine + H(+). Functionally, secretory calcium-dependent phospholipase A2 that primarily targets extracellular lipids, exerting anti-inflammatory and immunosuppressive functions. Hydrolyzes the ester bond of the fatty acyl group attached at sn-2 position of phospholipids (phospholipase A2 activity) with preference for phosphatidylethanolamines and phosphatidylglycerols over phosphatidylcholines. In draining lymph nodes, selectively hydrolyzes diacyl and alkenyl forms of phosphatidylethanolamines, releasing omega-3 polyunsaturated fatty acids (PUFAs) such as eicosapentaenoate and docosahexaenoate that are precursors of the anti-inflammatory lipid mediators, resolvins. During the resolution phase of acute inflammation drives docosahexaenoate-derived resolvin D1 synthesis, which suppresses dendritic cell activation and T-helper 1 immune response. May act in an autocrine and paracrine manner. Via a mechanism independent of its catalytic activity, promotes differentiation of regulatory T cells (Tregs) and participates in the maintenance of immune tolerance. May contribute to lipid remodeling of cellular membranes and generation of lipid mediators involved in pathogen clearance. Displays bactericidal activity against Gram-positive bacteria by directly hydrolyzing phospholipids of the bacterial membrane. The chain is Group IID secretory phospholipase A2 (PLA2G2D) from Homo sapiens (Human).